Reading from the N-terminus, the 362-residue chain is Sulfate/thiosulfate import ATP-binding protein CysA (362 aa).

The region spanning 3–237 is the ABC transporter domain; the sequence is IEIHDLSKQF…PANPFVYEFL (235 aa). 35-42 is an ATP binding site; that stretch reads GPSGSGKT.

It belongs to the ABC transporter superfamily. Sulfate/tungstate importer (TC 3.A.1.6) family. As to quaternary structure, the complex is composed of two ATP-binding proteins (CysA), two transmembrane proteins (CysT and CysW) and a solute-binding protein (CysP).

Its subcellular location is the cell inner membrane. It carries out the reaction sulfate(out) + ATP + H2O = sulfate(in) + ADP + phosphate + H(+). The catalysed reaction is thiosulfate(out) + ATP + H2O = thiosulfate(in) + ADP + phosphate + H(+). Functionally, part of the ABC transporter complex CysAWTP involved in sulfate/thiosulfate import. Responsible for energy coupling to the transport system. The protein is Sulfate/thiosulfate import ATP-binding protein CysA of Nitrosomonas europaea (strain ATCC 19718 / CIP 103999 / KCTC 2705 / NBRC 14298).